A 272-amino-acid polypeptide reads, in one-letter code: NADPH-dependent 7-cyano-7-deazaguanine reductase (272 aa).

82-84 (IES) provides a ligand contact to substrate. Residue 84–85 (SK) participates in NADPH binding. Catalysis depends on cysteine 178, which acts as the Thioimide intermediate. The active-site Proton donor is the aspartate 185. 217–218 (HE) contributes to the substrate binding site. Position 246-247 (246-247 (RG)) interacts with NADPH.

It belongs to the GTP cyclohydrolase I family. QueF type 2 subfamily. In terms of assembly, homodimer.

The protein resides in the cytoplasm. It carries out the reaction 7-aminomethyl-7-carbaguanine + 2 NADP(+) = 7-cyano-7-deazaguanine + 2 NADPH + 3 H(+). The protein operates within tRNA modification; tRNA-queuosine biosynthesis. In terms of biological role, catalyzes the NADPH-dependent reduction of 7-cyano-7-deazaguanine (preQ0) to 7-aminomethyl-7-deazaguanine (preQ1). The polypeptide is NADPH-dependent 7-cyano-7-deazaguanine reductase (Stenotrophomonas maltophilia (strain K279a)).